Here is a 503-residue protein sequence, read N- to C-terminus: Probable cytosol aminopeptidase (503 aa).

Lys-274 and Asp-279 together coordinate Mn(2+). Lys-286 is a catalytic residue. Mn(2+) is bound by residues Asp-297, Asp-356, and Glu-358. Arg-360 is an active-site residue.

This sequence belongs to the peptidase M17 family. The cofactor is Mn(2+).

The protein localises to the cytoplasm. The catalysed reaction is Release of an N-terminal amino acid, Xaa-|-Yaa-, in which Xaa is preferably Leu, but may be other amino acids including Pro although not Arg or Lys, and Yaa may be Pro. Amino acid amides and methyl esters are also readily hydrolyzed, but rates on arylamides are exceedingly low.. The enzyme catalyses Release of an N-terminal amino acid, preferentially leucine, but not glutamic or aspartic acids.. In terms of biological role, presumably involved in the processing and regular turnover of intracellular proteins. Catalyzes the removal of unsubstituted N-terminal amino acids from various peptides. This chain is Probable cytosol aminopeptidase, found in Burkholderia ambifaria (strain MC40-6).